Reading from the N-terminus, the 340-residue chain is Cyclic GMP-AMP synthase-like receptor 3 (340 aa).

ATP contacts are provided by residues serine 62 and 74–76; that span reads EAD. Residues glutamate 74, aspartate 76, and aspartate 177 each coordinate Mg(2+). ATP-binding positions include lysine 241 and 255 to 259; that span reads SYHLK. Positions 267 and 270 each coordinate Mn(2+).

The protein belongs to the mab-21 family. Mg(2+) serves as cofactor. Mn(2+) is required as a cofactor.

The enzyme catalyses 2 ATP = 3',3'-c-di-AMP + 2 diphosphate. Its function is as follows. Nucleotidyltransferase that catalyzes the formation of cyclic di-AMP (3',3'-c-di-AMP) from 2 molecules of ATP and plays a key role in innate immunity. Acts as a key sensor of double-stranded RNA (dsRNA), the presence of dsRNA in the cytoplasm being a danger signal that triggers the immune responses. Directly binds dsRNA, activating the nucleotidyltransferase activity, leading to synthesis of 3',3'-c-di-AMP, a second messenger that binds to and activates Sting, thereby triggering the immune response via activation of the NF-kappa-B transcription factor. The chain is Cyclic GMP-AMP synthase-like receptor 3 from Stylophora pistillata (Smooth cauliflower coral).